The sequence spans 133 residues: MARVTVEDCVDKVENRFELVLLAGHRARQISQGAPITVDRDNDKNPVVALREIADETLSPDDLKEDLIHSLQKHVEVDEPEAAPAQIANAAEEIAEGIAEAGEEDVVTFDRMSEEELLAGIEGLVAPEKNDGF.

The protein belongs to the RNA polymerase subunit omega family. As to quaternary structure, the RNAP catalytic core consists of 2 alpha, 1 beta, 1 beta' and 1 omega subunit. When a sigma factor is associated with the core the holoenzyme is formed, which can initiate transcription.

The catalysed reaction is RNA(n) + a ribonucleoside 5'-triphosphate = RNA(n+1) + diphosphate. In terms of biological role, promotes RNA polymerase assembly. Latches the N- and C-terminal regions of the beta' subunit thereby facilitating its interaction with the beta and alpha subunits. This is DNA-directed RNA polymerase subunit omega from Brucella abortus (strain S19).